The chain runs to 318 residues: Thymidylate synthase (318 aa).

Residues R25 and 180-181 contribute to the dUMP site; that span reads RR. Catalysis depends on C200, which acts as the Nucleophile. DUMP-binding positions include 220–223, N231, and 261–263; these read RSGD and HIY. D223 provides a ligand contact to (6R)-5,10-methylene-5,6,7,8-tetrahydrofolate. A317 contacts (6R)-5,10-methylene-5,6,7,8-tetrahydrofolate.

It belongs to the thymidylate synthase family. Bacterial-type ThyA subfamily. Homodimer.

Its subcellular location is the cytoplasm. It carries out the reaction dUMP + (6R)-5,10-methylene-5,6,7,8-tetrahydrofolate = 7,8-dihydrofolate + dTMP. It participates in pyrimidine metabolism; dTTP biosynthesis. Catalyzes the reductive methylation of 2'-deoxyuridine-5'-monophosphate (dUMP) to 2'-deoxythymidine-5'-monophosphate (dTMP) while utilizing 5,10-methylenetetrahydrofolate (mTHF) as the methyl donor and reductant in the reaction, yielding dihydrofolate (DHF) as a by-product. This enzymatic reaction provides an intracellular de novo source of dTMP, an essential precursor for DNA biosynthesis. The polypeptide is Thymidylate synthase (Lactobacillus acidophilus (strain ATCC 700396 / NCK56 / N2 / NCFM)).